A 191-amino-acid chain; its full sequence is Putative acetyltransferase DDB_G0280825 (191 aa).

This sequence belongs to the transferase hexapeptide repeat family.

This is Putative acetyltransferase DDB_G0280825 from Dictyostelium discoideum (Social amoeba).